A 540-amino-acid chain; its full sequence is ADP,ATP carrier protein 2 (540 aa).

11 consecutive transmembrane segments (helical) span residues 24 to 44 (FSKF…YCLL), 62 to 82 (VIPF…TMVY), 94 to 114 (VFYC…VIIY), 151 to 171 (IYYV…FWGL), 223 to 243 (SVML…IWLY), 295 to 315 (LLGL…FEVV), 337 to 357 (ITTL…GQCI), 367 to 387 (LVTP…IFAA), 391 to 411 (ISIF…WTGG), 458 to 478 (SGGS…AASL), and 480 to 500 (VIAL…AYIG).

Belongs to the ADP/ATP translocase tlc family.

It is found in the cell membrane. The protein is ADP,ATP carrier protein 2 (tlcB) of Chlamydia pneumoniae (Chlamydophila pneumoniae).